The sequence spans 385 residues: MSAANDKLPDILQDAVLKASVPVPDDFVQVKGIDYSAATATDMRASDLVNSMKTMGFQASSLGKACDIIDEMRSWRGKHIDELDEHDRKGQFDDAGYQKTTVFMGYTSNLISSGLRETLRYLVQHKMVDALVATAGGIEEDIIKCLAPTYLGEFSLEGKSLRDQGMNRIGNLLVPNDNYCKFEEWIVPIFDKMLEEQEEYVAKHGKDCLDANTDVDSPIWTPSKLIDRLGKEINDESSVLYWAHKNKIPIFCPAITDGSIGDMLFFHTFKASPKQIRLDIVADIRKINSMSMEASKAGMIILGGGLIKHHIANACLMRNGADYAVYINTGQEFDGSDAGARPDEAVSWGKIKAEAKSVKIYADVTIVFPLIVAATFANGKPLPKN.

NAD(+) is bound by residues 108–112, 134–136, E140, and D257; these read SNLIS and TAG. Residue 139 to 140 participates in spermidine binding; the sequence is EE. D262 contacts spermidine. An NAD(+)-binding site is contributed by G304. H309 serves as a coordination point for spermidine. 329-330 lines the NAD(+) pocket; it reads TG. Spermidine contacts are provided by residues 335 to 337 and 344 to 350; these read GSD and EAVSWGK. K350 functions as the Nucleophile in the catalytic mechanism. 363–364 contacts NAD(+); it reads DV.

It belongs to the deoxyhypusine synthase family. NAD(+) serves as cofactor.

It catalyses the reaction [eIF5A protein]-L-lysine + spermidine = [eIF5A protein]-deoxyhypusine + propane-1,3-diamine. It functions in the pathway protein modification; eIF5A hypusination. Functionally, catalyzes the NAD-dependent oxidative cleavage of spermidine and the subsequent transfer of the butylamine moiety of spermidine to the epsilon-amino group of a specific lysine residue of the eIF-5A precursor protein to form the intermediate deoxyhypusine residue. This Candida glabrata (strain ATCC 2001 / BCRC 20586 / JCM 3761 / NBRC 0622 / NRRL Y-65 / CBS 138) (Yeast) protein is Deoxyhypusine synthase (DYS1).